Reading from the N-terminus, the 283-residue chain is Mau operon transcriptional activator (283 aa).

The region spanning 1 to 58 (MNWDDLRVVAAINRCGSFNRAAKMLNVEETTIARRLARLEGSLGCVLFQAVDGQRRPT) is the HTH lysR-type domain. Positions 18–37 (FNRAAKMLNVEETTIARRLA) form a DNA-binding region, H-T-H motif.

It belongs to the LysR transcriptional regulatory family.

Its function is as follows. Transcriptional activator of the mau genes involved in methylamine metabolism. The sequence is that of Mau operon transcriptional activator (mauR) from Paracoccus denitrificans.